The following is a 165-amino-acid chain: Nucleotide-binding protein LBF_1338 (165 aa).

This sequence belongs to the YajQ family.

Its function is as follows. Nucleotide-binding protein. The sequence is that of Nucleotide-binding protein LBF_1338 from Leptospira biflexa serovar Patoc (strain Patoc 1 / Ames).